The following is a 565-amino-acid chain: Putative pentatricopeptide repeat-containing protein At3g05240 (565 aa).

13 PPR repeats span residues 37-70 (NVIP…IDCP), 71-105 (SVYI…GYSP), 106-140 (DYFT…GFEV), 141-171 (NMYV…IPQW), 172-206 (NVVA…GVKA), 207-241 (NETI…GFDP), 250-280 (NVIL…MPER), 281-315 (TLVS…GIAP), 316-350 (DKVT…GFVK), 351-381 (DAAI…LEKK), 382-416 (DTIA…GNAT), 418-448 (DGIT…MRDL), and 454-484 (TVEH…MPVK). Positions 489-564 (IWGALLNGCD…VLGHSSVETM (76 aa)) are type E motif.

The protein belongs to the PPR family. PCMP-E subfamily.

The protein is Putative pentatricopeptide repeat-containing protein At3g05240 (PCMP-E82) of Arabidopsis thaliana (Mouse-ear cress).